A 504-amino-acid chain; its full sequence is Protein DETOXIFICATION 38 (504 aa).

12 helical membrane-spanning segments follow: residues 56–76, 90–110, 139–159, 170–190, 208–228, 234–254, 273–295, 316–336, 356–376, 401–421, 433–453, and 457–477; these read LLLR…GMGI, LAAA…MLGM, IVLA…YPIL, YMGS…AVYF, ISAA…YAMG, IAYV…FYVI, GLWS…LWYT, SICM…NAAV, TWTA…VVIA, FLAV…VAVG, IGCY…TFNF, and GIWT…LYVT.

It belongs to the multi antimicrobial extrusion (MATE) (TC 2.A.66.1) family.

Its subcellular location is the membrane. This Arabidopsis thaliana (Mouse-ear cress) protein is Protein DETOXIFICATION 38.